The following is a 642-amino-acid chain: Threonine--tRNA ligase (642 aa).

Residues 1–61 form the TGS domain; the sequence is MPIITLPDGS…EEDASLEIIT (61 aa). The segment at 244–535 is catalytic; it reads DHRKIGKQLD…LIEEYAGFFP (292 aa). Zn(2+) is bound by residues cysteine 335, histidine 386, and histidine 512.

This sequence belongs to the class-II aminoacyl-tRNA synthetase family. Homodimer. Requires Zn(2+) as cofactor.

It is found in the cytoplasm. It carries out the reaction tRNA(Thr) + L-threonine + ATP = L-threonyl-tRNA(Thr) + AMP + diphosphate + H(+). Its function is as follows. Catalyzes the attachment of threonine to tRNA(Thr) in a two-step reaction: L-threonine is first activated by ATP to form Thr-AMP and then transferred to the acceptor end of tRNA(Thr). Also edits incorrectly charged L-seryl-tRNA(Thr). This Vibrio parahaemolyticus serotype O3:K6 (strain RIMD 2210633) protein is Threonine--tRNA ligase.